Reading from the N-terminus, the 142-residue chain is Large ribosomal subunit protein uL13 (142 aa).

The protein belongs to the universal ribosomal protein uL13 family. In terms of assembly, part of the 50S ribosomal subunit.

In terms of biological role, this protein is one of the early assembly proteins of the 50S ribosomal subunit, although it is not seen to bind rRNA by itself. It is important during the early stages of 50S assembly. The chain is Large ribosomal subunit protein uL13 from Pasteurella multocida (strain Pm70).